A 315-amino-acid polypeptide reads, in one-letter code: Ribosomal RNA small subunit methyltransferase H (315 aa).

S-adenosyl-L-methionine-binding positions include 35-37, Asp-55, Phe-80, Asp-102, and Gln-109; that span reads GGH.

It belongs to the methyltransferase superfamily. RsmH family.

The protein resides in the cytoplasm. It carries out the reaction cytidine(1402) in 16S rRNA + S-adenosyl-L-methionine = N(4)-methylcytidine(1402) in 16S rRNA + S-adenosyl-L-homocysteine + H(+). Its function is as follows. Specifically methylates the N4 position of cytidine in position 1402 (C1402) of 16S rRNA. The polypeptide is Ribosomal RNA small subunit methyltransferase H (Shewanella halifaxensis (strain HAW-EB4)).